A 213-amino-acid polypeptide reads, in one-letter code: Kynurenine formamidase (213 aa).

Residue Trp18 participates in substrate binding. Positions 48, 52, and 54 each coordinate Zn(2+). His58 (proton donor/acceptor) is an active-site residue. Zn(2+) is bound by residues His160 and Glu172.

It belongs to the Cyclase 1 superfamily. KynB family. As to quaternary structure, homodimer. Zn(2+) serves as cofactor.

The catalysed reaction is N-formyl-L-kynurenine + H2O = L-kynurenine + formate + H(+). Its pathway is amino-acid degradation; L-tryptophan degradation via kynurenine pathway; L-kynurenine from L-tryptophan: step 2/2. In terms of biological role, catalyzes the hydrolysis of N-formyl-L-kynurenine to L-kynurenine, the second step in the kynurenine pathway of tryptophan degradation. The protein is Kynurenine formamidase of Burkholderia pseudomallei (strain 1710b).